Reading from the N-terminus, the 240-residue chain is Ribosomal RNA small subunit methyltransferase I (240 aa).

The protein belongs to the methyltransferase superfamily. RsmI family.

It localises to the cytoplasm. It carries out the reaction cytidine(1402) in 16S rRNA + S-adenosyl-L-methionine = 2'-O-methylcytidine(1402) in 16S rRNA + S-adenosyl-L-homocysteine + H(+). In terms of biological role, catalyzes the 2'-O-methylation of the ribose of cytidine 1402 (C1402) in 16S rRNA. The protein is Ribosomal RNA small subunit methyltransferase I of Leptospira biflexa serovar Patoc (strain Patoc 1 / ATCC 23582 / Paris).